We begin with the raw amino-acid sequence, 338 residues long: DNA-directed RNA polymerase subunit alpha (338 aa).

The interval 1 to 226 (MLIAQRPTLT…ELFGLARELN (226 aa)) is alpha N-terminal domain (alpha-NTD). Positions 243–338 (LAADLALPIE…DADYADEQYN (96 aa)) are alpha C-terminal domain (alpha-CTD).

The protein belongs to the RNA polymerase alpha chain family. Homodimer. The RNAP catalytic core consists of 2 alpha, 1 beta, 1 beta' and 1 omega subunit. When a sigma factor is associated with the core the holoenzyme is formed, which can initiate transcription.

It carries out the reaction RNA(n) + a ribonucleoside 5'-triphosphate = RNA(n+1) + diphosphate. Its function is as follows. DNA-dependent RNA polymerase catalyzes the transcription of DNA into RNA using the four ribonucleoside triphosphates as substrates. This is DNA-directed RNA polymerase subunit alpha from Beutenbergia cavernae (strain ATCC BAA-8 / DSM 12333 / CCUG 43141 / JCM 11478 / NBRC 16432 / NCIMB 13614 / HKI 0122).